We begin with the raw amino-acid sequence, 204 residues long: Large ribosomal subunit protein bL25 (204 aa).

Residues 1-23 are disordered; the sequence is MSETLHLSAETRDRAGKGASRAL.

It belongs to the bacterial ribosomal protein bL25 family. CTC subfamily. In terms of assembly, part of the 50S ribosomal subunit; part of the 5S rRNA/L5/L18/L25 subcomplex. Contacts the 5S rRNA. Binds to the 5S rRNA independently of L5 and L18.

In terms of biological role, this is one of the proteins that binds to the 5S RNA in the ribosome where it forms part of the central protuberance. The chain is Large ribosomal subunit protein bL25 from Novosphingobium aromaticivorans (strain ATCC 700278 / DSM 12444 / CCUG 56034 / CIP 105152 / NBRC 16084 / F199).